The primary structure comprises 96 residues: Co-chaperonin GroES (96 aa).

Belongs to the GroES chaperonin family. In terms of assembly, heptamer of 7 subunits arranged in a ring. Interacts with the chaperonin GroEL.

Its subcellular location is the cytoplasm. Together with the chaperonin GroEL, plays an essential role in assisting protein folding. The GroEL-GroES system forms a nano-cage that allows encapsulation of the non-native substrate proteins and provides a physical environment optimized to promote and accelerate protein folding. GroES binds to the apical surface of the GroEL ring, thereby capping the opening of the GroEL channel. The sequence is that of Co-chaperonin GroES from Tremblaya princeps.